A 493-amino-acid chain; its full sequence is Probable cytosol aminopeptidase (493 aa).

Lys-256 and Asp-261 together coordinate Mn(2+). The active site involves Lys-268. Mn(2+) is bound by residues Asp-279, Asp-338, and Glu-340. Residue Arg-342 is part of the active site.

It belongs to the peptidase M17 family. Mn(2+) is required as a cofactor.

Its subcellular location is the cytoplasm. The catalysed reaction is Release of an N-terminal amino acid, Xaa-|-Yaa-, in which Xaa is preferably Leu, but may be other amino acids including Pro although not Arg or Lys, and Yaa may be Pro. Amino acid amides and methyl esters are also readily hydrolyzed, but rates on arylamides are exceedingly low.. The enzyme catalyses Release of an N-terminal amino acid, preferentially leucine, but not glutamic or aspartic acids.. Functionally, presumably involved in the processing and regular turnover of intracellular proteins. Catalyzes the removal of unsubstituted N-terminal amino acids from various peptides. This is Probable cytosol aminopeptidase from Phytoplasma australiense.